We begin with the raw amino-acid sequence, 4115 residues long: Transcription-associated protein 1 (4115 aa).

Residues 1 to 11 are compositionally biased toward polar residues; it reads MDPSIPSTSHR. Disordered regions lie at residues 1-21 and 543-563; these read MDPSIPSTSHRSVPPDRGVQP and ESEQKRNELPTPTKEHTKKTS. Over residues 544-563 the composition is skewed to basic and acidic residues; that stretch reads SEQKRNELPTPTKEHTKKTS. TPR repeat units follow at residues 1341–1374 and 1820–1853; these read LDGLQRFVFICPEGFEFEKDSEIYKRYLVHLLDL and QDYDMFFNVVSVFMGKFQTDFTFVREYLEVEVIP. A disordered region spans residues 2678 to 2701; it reads LEEPEPMEVDQPKNAPAEEPKDNK. Positions 2808–3421 constitute an FAT domain; that stretch reads LIEFISSKHE…SNGASKVSKS (614 aa). The TPR 3 repeat unit spans residues 2855–2888; the sequence is IETLESLGALYKELAEFDQYSAIWERRSVFPETM. Residues 3740–4100 form the PI3K/PI4K catalytic domain; sequence EPYFEIVMRG…CNSLIIRAKD (361 aa). The interval 3746–3752 is G-loop; it reads VMRGGQV. Positions 3959 to 3967 are catalytic loop; it reads NLSPMTPHQ. Positions 3979–4006 are activation loop; sequence NPFYRFELGTGQLMDIEHFAHEVPFRLT. The 33-residue stretch at 4083–4115 folds into the FATC domain; that stretch reads DAKVKKDDCNSLIIRAKDSDNLSRMPPTYHAWF.

It belongs to the PI3/PI4-kinase family. TRA1 subfamily.

It localises to the nucleus. Influences germ cell fate in hermaphrodites. Acts downstream of tra-2 and tra-3 and through the Tip60 histone acetyltransferase complex to regulate germ cell fate decisions. Required for spermatogenesis and embryonic development. Acts with tra-2 to promote expression of fog-3 and control male tail development. Involved in the negative regulation of vulval development. The protein is Transcription-associated protein 1 of Caenorhabditis briggsae.